A 321-amino-acid polypeptide reads, in one-letter code: Olfactory receptor 56B34 (321 aa).

Topologically, residues 1–36 (MGTALHETNSSEVHVSEFILLGFPGIHEFQIWLSLP) are extracellular. The chain crosses the membrane as a helical span at residues 37 to 57 (MALLYIVALGANLLILITIYL). The Cytoplasmic portion of the chain corresponds to 58–70 (EPTLHQPMYQFLG). The helical transmembrane segment at 71 to 91 (ILAAVDIGLATTSMPKILAIL) threads the bilayer. Topologically, residues 92 to 105 (WFDAKTISLPECFA) are extracellular. A disulfide bond links C103 and C185. The chain crosses the membrane as a helical span at residues 106–126 (QIYAIHTFMCMESGVFLCMAI). Topologically, residues 127–128 (DR) are cytoplasmic. Residues 129–149 (YVAICYPLQYPSIVTEAFVIK) traverse the membrane as a helical segment. Topologically, residues 150–207 (ATLSMLLRNGLLTIPVPVLAAQRQYCSRNEIDHCLCSNLGVISLACDDITVNRFYQLA) are extracellular. A helical transmembrane segment spans residues 208-228 (LAWLVVGSDMILVYASYALII). Over 229–250 (RSVLRLNSTEAASKALSTCSSH) the chain is Cytoplasmic. The chain crosses the membrane as a helical span at residues 251–271 (LILIMFYYTAIVIVSVTHLAG). Over 272–275 (RRVP) the chain is Extracellular. The chain crosses the membrane as a helical span at residues 276-296 (LIPVLLNVMHIVIPPSLNPVV). At 297-321 (YALRTQELKVGFRKVFSLSEFVSRK) the chain is on the cytoplasmic side.

It belongs to the G-protein coupled receptor 1 family.

The protein localises to the cell membrane. Odorant receptor. The sequence is that of Olfactory receptor 56B34 from Mus musculus (Mouse).